The sequence spans 84 residues: Large ribosomal subunit protein bL31B (84 aa).

Belongs to the bacterial ribosomal protein bL31 family. Type B subfamily. As to quaternary structure, part of the 50S ribosomal subunit.

The polypeptide is Large ribosomal subunit protein bL31B (Streptomyces griseus subsp. griseus (strain JCM 4626 / CBS 651.72 / NBRC 13350 / KCC S-0626 / ISP 5235)).